The primary structure comprises 427 residues: Serine--tRNA ligase (427 aa).

Position 231–233 (231–233) interacts with L-serine; it reads TAE. 262 to 264 contributes to the ATP binding site; the sequence is RSE. Glutamate 285 provides a ligand contact to L-serine. 349-352 contacts ATP; it reads EISS. Serine 385 provides a ligand contact to L-serine.

The protein belongs to the class-II aminoacyl-tRNA synthetase family. Type-1 seryl-tRNA synthetase subfamily. As to quaternary structure, homodimer. The tRNA molecule binds across the dimer.

The protein localises to the cytoplasm. It carries out the reaction tRNA(Ser) + L-serine + ATP = L-seryl-tRNA(Ser) + AMP + diphosphate + H(+). It catalyses the reaction tRNA(Sec) + L-serine + ATP = L-seryl-tRNA(Sec) + AMP + diphosphate + H(+). It participates in aminoacyl-tRNA biosynthesis; selenocysteinyl-tRNA(Sec) biosynthesis; L-seryl-tRNA(Sec) from L-serine and tRNA(Sec): step 1/1. Catalyzes the attachment of serine to tRNA(Ser). Is also able to aminoacylate tRNA(Sec) with serine, to form the misacylated tRNA L-seryl-tRNA(Sec), which will be further converted into selenocysteinyl-tRNA(Sec). This Rhizobium leguminosarum bv. trifolii (strain WSM2304) protein is Serine--tRNA ligase.